The chain runs to 297 residues: Small ribosomal subunit protein uS2 (297 aa).

A disordered region spans residues 266–297; that stretch reads GASWDAAEPSDWAATPAAAGQEWAASGATEQW. Residues 282-297 are compositionally biased toward low complexity; sequence AAAGQEWAASGATEQW.

This sequence belongs to the universal ribosomal protein uS2 family. In terms of assembly, component of the small ribosomal subunit. Mature ribosomes consist of a small (40S) and a large (60S) subunit. The 40S subunit contains about 33 different proteins and 1 molecule of RNA (18S). The 60S subunit contains about 49 different proteins and 3 molecules of RNA (25S, 5.8S and 5S). Interacts with rps21.

The protein resides in the cytoplasm. Its function is as follows. Required for the assembly and/or stability of the 40S ribosomal subunit. Required for the processing of the 20S rRNA-precursor to mature 18S rRNA in a late step of the maturation of 40S ribosomal subunits. The chain is Small ribosomal subunit protein uS2 (rps0) from Sclerotinia sclerotiorum (strain ATCC 18683 / 1980 / Ss-1) (White mold).